A 47-amino-acid polypeptide reads, in one-letter code: Small, acid-soluble spore protein N (47 aa).

The tract at residues 1–47 is disordered; that stretch reads MPREHDKQSKFAPSHLGTKPVEYKRNKGKKMHDKSGETPIIMQTKGE.

This sequence belongs to the SspN family.

The protein resides in the spore core. The chain is Small, acid-soluble spore protein N from Bacillus licheniformis (strain ATCC 14580 / DSM 13 / JCM 2505 / CCUG 7422 / NBRC 12200 / NCIMB 9375 / NCTC 10341 / NRRL NRS-1264 / Gibson 46).